The chain runs to 128 residues: Large ribosomal subunit protein mL52 (128 aa).

The transit peptide at methionine 1–alanine 28 directs the protein to the mitochondrion.

Belongs to the mitochondrion-specific ribosomal protein mL52 family. Component of the mitochondrial ribosome large subunit (39S) which comprises a 16S rRNA and about 50 distinct proteins.

Its subcellular location is the mitochondrion. The protein is Large ribosomal subunit protein mL52 (mRpL52) of Drosophila pseudoobscura pseudoobscura (Fruit fly).